A 290-amino-acid chain; its full sequence is Glycine--tRNA ligase alpha subunit (290 aa).

The protein belongs to the class-II aminoacyl-tRNA synthetase family. In terms of assembly, tetramer of two alpha and two beta subunits.

It is found in the cytoplasm. The catalysed reaction is tRNA(Gly) + glycine + ATP = glycyl-tRNA(Gly) + AMP + diphosphate. The polypeptide is Glycine--tRNA ligase alpha subunit (Desulfotalea psychrophila (strain LSv54 / DSM 12343)).